Reading from the N-terminus, the 184-residue chain is Photosystem I assembly protein Ycf4 (184 aa).

The next 2 helical transmembrane spans lie at 22–42 and 57–77; these read FFWA…GTSS and IIFF…LFIS.

Belongs to the Ycf4 family.

The protein localises to the plastid. It is found in the chloroplast thylakoid membrane. In terms of biological role, seems to be required for the assembly of the photosystem I complex. In Aethionema cordifolium (Lebanon stonecress), this protein is Photosystem I assembly protein Ycf4.